Here is a 251-residue protein sequence, read N- to C-terminus: Aliphatic sulfonates import ATP-binding protein SsuB (251 aa).

An ABC transporter domain is found at Val3–Gln231. Gly39–Ser46 is an ATP binding site.

Belongs to the ABC transporter superfamily. Aliphatic sulfonates importer (TC 3.A.1.17.2) family. In terms of assembly, the complex is composed of two ATP-binding proteins (SsuB), two transmembrane proteins (SsuC) and a solute-binding protein (SsuA).

The protein resides in the cell membrane. The enzyme catalyses ATP + H2O + aliphatic sulfonate-[sulfonate-binding protein]Side 1 = ADP + phosphate + aliphatic sulfonateSide 2 + [sulfonate-binding protein]Side 1.. Part of the ABC transporter complex SsuABC involved in aliphatic sulfonates import. Responsible for energy coupling to the transport system. The protein is Aliphatic sulfonates import ATP-binding protein SsuB of Bacillus thuringiensis subsp. konkukian (strain 97-27).